The following is a 314-amino-acid chain: tRNA pseudouridine synthase B (314 aa).

Asp54 (nucleophile) is an active-site residue.

This sequence belongs to the pseudouridine synthase TruB family. Type 1 subfamily.

It catalyses the reaction uridine(55) in tRNA = pseudouridine(55) in tRNA. In terms of biological role, responsible for synthesis of pseudouridine from uracil-55 in the psi GC loop of transfer RNAs. This chain is tRNA pseudouridine synthase B, found in Cupriavidus metallidurans (strain ATCC 43123 / DSM 2839 / NBRC 102507 / CH34) (Ralstonia metallidurans).